The primary structure comprises 268 residues: Tryptophan synthase alpha chain (268 aa).

Residues glutamate 49 and aspartate 60 each act as proton acceptor in the active site.

It belongs to the TrpA family. Tetramer of two alpha and two beta chains.

The catalysed reaction is (1S,2R)-1-C-(indol-3-yl)glycerol 3-phosphate + L-serine = D-glyceraldehyde 3-phosphate + L-tryptophan + H2O. Its pathway is amino-acid biosynthesis; L-tryptophan biosynthesis; L-tryptophan from chorismate: step 5/5. The alpha subunit is responsible for the aldol cleavage of indoleglycerol phosphate to indole and glyceraldehyde 3-phosphate. This chain is Tryptophan synthase alpha chain, found in Xanthomonas oryzae pv. oryzae (strain PXO99A).